We begin with the raw amino-acid sequence, 218 residues long: Ras-related protein Rab-42 (218 aa).

Positions 19, 21, 22, 23, and 46 each coordinate GTP. Mg(2+) contacts are provided by threonine 23, threonine 46, and aspartate 70. The GTP site is built by glycine 73, lysine 130, aspartate 132, valine 160, and lysine 161. Residues cysteine 216 and cysteine 218 are each lipidated (S-geranylgeranyl cysteine).

Belongs to the small GTPase superfamily. Rab family. Mg(2+) serves as cofactor.

Its subcellular location is the membrane. It catalyses the reaction GTP + H2O = GDP + phosphate + H(+). With respect to regulation, regulated by guanine nucleotide exchange factors (GEFs) which promote the exchange of bound GDP for free GTP. Regulated by GTPase activating proteins (GAPs) which increase the GTP hydrolysis activity. Inhibited by GDP dissociation inhibitors (GDIs). Functionally, the small GTPases Rab are key regulators of intracellular membrane trafficking, from the formation of transport vesicles to their fusion with membranes. Rabs cycle between an inactive GDP-bound form and an active GTP-bound form that is able to recruit to membranes different sets of downstream effectors directly responsible for vesicle formation, movement, tethering and fusion. The physiological function of RAB42 remains undefined. This Homo sapiens (Human) protein is Ras-related protein Rab-42.